The following is a 181-amino-acid chain: Large ribosomal subunit protein uL5 (181 aa).

This sequence belongs to the universal ribosomal protein uL5 family. Part of the 50S ribosomal subunit; part of the 5S rRNA/L5/L18/L25 subcomplex. Contacts the 5S rRNA and the P site tRNA. Forms a bridge to the 30S subunit in the 70S ribosome.

Functionally, this is one of the proteins that bind and probably mediate the attachment of the 5S RNA into the large ribosomal subunit, where it forms part of the central protuberance. In the 70S ribosome it contacts protein S13 of the 30S subunit (bridge B1b), connecting the 2 subunits; this bridge is implicated in subunit movement. Contacts the P site tRNA; the 5S rRNA and some of its associated proteins might help stabilize positioning of ribosome-bound tRNAs. This chain is Large ribosomal subunit protein uL5, found in Campylobacter jejuni subsp. doylei (strain ATCC BAA-1458 / RM4099 / 269.97).